The chain runs to 155 residues: Protein LOL2 (155 aa).

M1 carries the N-acetylmethionine modification. The tract at residues 1–35 is disordered; sequence MEEIQQQTQKEEQKHREEEEEEEEGPPPGWESAVL. 2 putative zinc finger regions span residues 60–90 and 98–128; these read QMVC…VNLV and QVNC…VTDI. The disordered stretch occupies residues 130-155; the sequence is ENNKRPPWSEQQGPLKSLSSLRRAEN. Residues 138–149 show a composition bias toward polar residues; it reads SEQQGPLKSLSS.

It localises to the nucleus. Functionally, putative zinc finger that may be involved in programmed cell death and defense response. The polypeptide is Protein LOL2 (LOL2) (Arabidopsis thaliana (Mouse-ear cress)).